Consider the following 283-residue polypeptide: 4-diphosphocytidyl-2-C-methyl-D-erythritol kinase (283 aa).

Lysine 9 is a catalytic residue. 93–103 contacts ATP; it reads PIAAGLAGGSS. Residue aspartate 135 is part of the active site.

Belongs to the GHMP kinase family. IspE subfamily.

The catalysed reaction is 4-CDP-2-C-methyl-D-erythritol + ATP = 4-CDP-2-C-methyl-D-erythritol 2-phosphate + ADP + H(+). It functions in the pathway isoprenoid biosynthesis; isopentenyl diphosphate biosynthesis via DXP pathway; isopentenyl diphosphate from 1-deoxy-D-xylulose 5-phosphate: step 3/6. In terms of biological role, catalyzes the phosphorylation of the position 2 hydroxy group of 4-diphosphocytidyl-2C-methyl-D-erythritol. In Macrococcus caseolyticus (strain JCSC5402) (Macrococcoides caseolyticum), this protein is 4-diphosphocytidyl-2-C-methyl-D-erythritol kinase.